Here is a 239-residue protein sequence, read N- to C-terminus: Peptidyl-tRNA hydrolase (239 aa).

Tyrosine 14 lines the tRNA pocket. Residue histidine 19 is the Proton acceptor of the active site. TRNA contacts are provided by phenylalanine 64, asparagine 66, and asparagine 112. The disordered stretch occupies residues 199–227 (EKPAQKGRSHIRQARPKAPPAELPSSGPM). Over residues 203–213 (QKGRSHIRQAR) the composition is skewed to basic residues.

It belongs to the PTH family. As to quaternary structure, monomer.

It is found in the cytoplasm. The catalysed reaction is an N-acyl-L-alpha-aminoacyl-tRNA + H2O = an N-acyl-L-amino acid + a tRNA + H(+). Hydrolyzes ribosome-free peptidyl-tRNAs (with 1 or more amino acids incorporated), which drop off the ribosome during protein synthesis, or as a result of ribosome stalling. Functionally, catalyzes the release of premature peptidyl moieties from peptidyl-tRNA molecules trapped in stalled 50S ribosomal subunits, and thus maintains levels of free tRNAs and 50S ribosomes. This chain is Peptidyl-tRNA hydrolase, found in Chelativorans sp. (strain BNC1).